The following is a 256-amino-acid chain: uncharacterized protein (256 aa).

Belongs to the metallo-beta-lactamase superfamily.

This is an uncharacterized protein from Methanocaldococcus jannaschii (strain ATCC 43067 / DSM 2661 / JAL-1 / JCM 10045 / NBRC 100440) (Methanococcus jannaschii).